We begin with the raw amino-acid sequence, 33 residues long: MAEEIFNTAVITFTLVLVGLGAGYLLLRLTPDD.

A helical transmembrane segment spans residues 5–25; the sequence is IFNTAVITFTLVLVGLGAGYL.

This sequence belongs to the PetM family. In terms of assembly, the 4 large subunits of the cytochrome b6-f complex are cytochrome b6, subunit IV (17 kDa polypeptide, PetD), cytochrome f and the Rieske protein, while the 4 small subunits are PetG, PetL, PetM and PetN. The complex functions as a dimer.

Its subcellular location is the cellular thylakoid membrane. Its function is as follows. Component of the cytochrome b6-f complex, which mediates electron transfer between photosystem II (PSII) and photosystem I (PSI), cyclic electron flow around PSI, and state transitions. This Thermosynechococcus vestitus (strain NIES-2133 / IAM M-273 / BP-1) protein is Cytochrome b6-f complex subunit 7.